A 595-amino-acid polypeptide reads, in one-letter code: Chaperone protein HscA homolog (595 aa).

Belongs to the heat shock protein 70 family.

Chaperone involved in the maturation of iron-sulfur cluster-containing proteins. Has a low intrinsic ATPase activity which is markedly stimulated by HscB. In Rickettsia africae (strain ESF-5), this protein is Chaperone protein HscA homolog.